A 106-amino-acid polypeptide reads, in one-letter code: Small ribosomal subunit protein uS10 (106 aa).

Belongs to the universal ribosomal protein uS10 family. Part of the 30S ribosomal subunit.

In terms of biological role, involved in the binding of tRNA to the ribosomes. This chain is Small ribosomal subunit protein uS10, found in Synechococcus sp. (strain WH7803).